A 204-amino-acid chain; its full sequence is Dihydroorotase (204 aa).

H34 provides a ligand contact to Zn(2+). L79 contributes to the substrate binding site. Position 107 (D107) interacts with Zn(2+). Residue D107 is part of the active site. Substrate contacts are provided by H111 and A123.

The protein belongs to the metallo-dependent hydrolases superfamily. DHOase family. Class II DHOase subfamily. Homodimer. It depends on Zn(2+) as a cofactor.

The catalysed reaction is (S)-dihydroorotate + H2O = N-carbamoyl-L-aspartate + H(+). It participates in pyrimidine metabolism; UMP biosynthesis via de novo pathway; (S)-dihydroorotate from bicarbonate: step 3/3. Functionally, catalyzes the reversible cyclization of carbamoyl aspartate to dihydroorotate. The polypeptide is Dihydroorotase (Serratia marcescens).